We begin with the raw amino-acid sequence, 1499 residues long: DNA-directed RNA polymerase subunit beta' (1499 aa).

Cysteine 67, cysteine 69, cysteine 82, and cysteine 85 together coordinate Zn(2+). Residues aspartate 497, aspartate 499, and aspartate 501 each contribute to the Mg(2+) site. Positions 865, 940, 947, and 950 each coordinate Zn(2+). A disordered region spans residues 1475–1499; sequence YEPSQRAYQEDEYAKKEDGEIAIDD. Basic and acidic residues predominate over residues 1482-1493; that stretch reads YQEDEYAKKEDG.

This sequence belongs to the RNA polymerase beta' chain family. In terms of assembly, the RNAP catalytic core consists of 2 alpha, 1 beta, 1 beta' and 1 omega subunit. When a sigma factor is associated with the core the holoenzyme is formed, which can initiate transcription. Mg(2+) serves as cofactor. The cofactor is Zn(2+).

It carries out the reaction RNA(n) + a ribonucleoside 5'-triphosphate = RNA(n+1) + diphosphate. DNA-dependent RNA polymerase catalyzes the transcription of DNA into RNA using the four ribonucleoside triphosphates as substrates. This is DNA-directed RNA polymerase subunit beta' from Chloroherpeton thalassium (strain ATCC 35110 / GB-78).